Here is a 309-residue protein sequence, read N- to C-terminus: Ferrochelatase (309 aa).

Positions 187 and 265 each coordinate Fe cation.

It belongs to the ferrochelatase family.

It is found in the cytoplasm. The enzyme catalyses heme b + 2 H(+) = protoporphyrin IX + Fe(2+). It functions in the pathway porphyrin-containing compound metabolism; protoheme biosynthesis; protoheme from protoporphyrin-IX: step 1/1. In terms of biological role, catalyzes the ferrous insertion into protoporphyrin IX. The chain is Ferrochelatase from Nitratiruptor sp. (strain SB155-2).